The following is a 452-amino-acid chain: Lamina-associated polypeptide 2, isoform beta (452 aa).

Residues 1-409 (MPEFLEDPSV…KSEKTKKGRS (409 aa)) form a nucleoplasmic region. The LEM-like domain maps to 5–48 (LEDPSVLTKDKLKSELVANNVTLPAGEQRKDVYVQLYLQHLTAR). 2 disordered regions span residues 48–113 (RNRP…DVTE) and 149–264 (REQG…VEPS). Residues 49 to 107 (NRPPLAAGANSKGPPDFSSDEEREPTPVLGSGASVGRGRGAVGRKATKKTDKPRPEDKD) form a linker region. A phosphoserine mark is found at Ser66 and Ser67. Thr74 carries the phosphothreonine modification. Ser82 carries the post-translational modification Phosphoserine. Arg85 and Arg87 each carry omega-N-methylarginine. A compositionally biased stretch (basic and acidic residues) spans 96–105 (KKTDKPRPED). The LEM domain maps to 108–152 (DLDVTELSNEELLEQLVRYGVNPGPIVGTTRKLYEKKLLKLREQG). An NAKAP95-binding N region spans residues 137 to 242 (TRKLYEKKLL…TSGSSKGGPL (106 aa)). Over residues 154–177 (ESRSSTPLPTVSSSAENTRQNGSN) the composition is skewed to polar residues. Phosphoserine occurs at positions 155 and 158. Residue Thr159 is modified to Phosphothreonine. 5 positions are modified to phosphoserine: Ser165, Ser167, Ser176, Ser179, and Ser183. A compositionally biased stretch (basic and acidic residues) spans 178–202 (DSDRYSDNDEDSKIELKLEKREPLK). Lys206 bears the N6-acetyllysine mark. The segment at 298 to 370 (TGNFKHASSI…SCRRPIKGAA (73 aa)) is binds lamins B. Residues 299-373 (GNFKHASSIL…RPIKGAAGRP (75 aa)) are NAKAP95-binding C. Phosphoserine is present on residues Ser305, Ser306, and Ser361. The residue at position 388 (Lys388) is an N6-acetyllysine. A helical; Signal-anchor for type II membrane protein transmembrane segment spans residues 410-430 (VPMWIKMLLFALVAGFLFLVY). Residues 431–452 (QAMETNQGNPFTNFLQDTKISN) are Lumenal-facing.

Belongs to the LEM family. As to quaternary structure, interacts with LMNB1, LMNB2, BANF1, AKAP8L, GMCL and chromosomes. In terms of processing, mitosis-specific phosphorylation specifically abolishes its binding to lamin B and chromosomes.

Its subcellular location is the nucleus inner membrane. The protein resides in the chromosome. Functionally, binds directly to lamin B1 and chromosomes in a mitotic phosphorylation-regulated manner. May play an important role in nuclear envelope reassembly at the end of mitosis and/or anchoring of the nuclear lamina and interphase chromosomes to the nuclear envelope. This chain is Lamina-associated polypeptide 2, isoform beta (Tmpo), found in Rattus norvegicus (Rat).